The chain runs to 422 residues: GTPase Obg (422 aa).

The 156-residue stretch at Ala2–Met157 folds into the Obg domain. The OBG-type G domain occupies Ser158–Glu325. GTP is bound by residues Gly164–Ser171, Phe189–Val193, Asp210–Gly213, Asn279–Asp282, and Ser306–Ile308. Positions 171 and 191 each coordinate Mg(2+). One can recognise an OCT domain in the interval Glu334–Gly420.

It belongs to the TRAFAC class OBG-HflX-like GTPase superfamily. OBG GTPase family. In terms of assembly, monomer. Mg(2+) serves as cofactor.

It localises to the cytoplasm. In terms of biological role, an essential GTPase which binds GTP, GDP and possibly (p)ppGpp with moderate affinity, with high nucleotide exchange rates and a fairly low GTP hydrolysis rate. Plays a role in control of the cell cycle, stress response, ribosome biogenesis and in those bacteria that undergo differentiation, in morphogenesis control. The protein is GTPase Obg of Mycoplasmopsis agalactiae (strain NCTC 10123 / CIP 59.7 / PG2) (Mycoplasma agalactiae).